The chain runs to 142 residues: MKTIFFKEHEAPRSWYLIDAAGKPLGRVAAKTAAMLRGKHKVSFAPHQEIGDYVVIINAEKVAVTGNKAKDKMYYTHSGYVGGLKSINFNGLIAKKPAEPLMIAIKGMLPKGPLGRKLLTNVKVYAGPEHPHQAQNPIAVEV.

Belongs to the universal ribosomal protein uL13 family. Part of the 50S ribosomal subunit.

Functionally, this protein is one of the early assembly proteins of the 50S ribosomal subunit, although it is not seen to bind rRNA by itself. It is important during the early stages of 50S assembly. The polypeptide is Large ribosomal subunit protein uL13 (Treponema denticola (strain ATCC 35405 / DSM 14222 / CIP 103919 / JCM 8153 / KCTC 15104)).